We begin with the raw amino-acid sequence, 1402 residues long: DNA-directed RNA polymerase subunit beta' (1402 aa).

Cys71, Cys73, Cys86, and Cys89 together coordinate Zn(2+). Positions 462, 464, and 466 each coordinate Mg(2+). Zn(2+)-binding residues include Cys811, Cys885, Cys892, and Cys895.

Belongs to the RNA polymerase beta' chain family. In terms of assembly, the RNAP catalytic core consists of 2 alpha, 1 beta, 1 beta' and 1 omega subunit. When a sigma factor is associated with the core the holoenzyme is formed, which can initiate transcription. Mg(2+) serves as cofactor. Zn(2+) is required as a cofactor.

It catalyses the reaction RNA(n) + a ribonucleoside 5'-triphosphate = RNA(n+1) + diphosphate. Its function is as follows. DNA-dependent RNA polymerase catalyzes the transcription of DNA into RNA using the four ribonucleoside triphosphates as substrates. The chain is DNA-directed RNA polymerase subunit beta' from Bartonella henselae (strain ATCC 49882 / DSM 28221 / CCUG 30454 / Houston 1) (Rochalimaea henselae).